Reading from the N-terminus, the 331-residue chain is 2-hydroxyacid dehydrogenase homolog (331 aa).

NAD(+)-binding positions include 154–155 (KI), 232–234 (TSR), and D258. The active site involves R234. The active site involves E263. H295 acts as the Proton donor in catalysis. 295-298 (HQAF) contacts NAD(+).

Belongs to the D-isomer specific 2-hydroxyacid dehydrogenase family.

This chain is 2-hydroxyacid dehydrogenase homolog (ddh), found in Haemophilus influenzae (strain ATCC 51907 / DSM 11121 / KW20 / Rd).